Here is a 421-residue protein sequence, read N- to C-terminus: Probable mitochondrial chaperone BCS1-A (421 aa).

The Mitochondrial intermembrane segment spans residues 1–10 (MNHLKDQSKS). A helical membrane pass occupies residues 11–31 (IVLGISSGIGIFLISGGINIF). Topologically, residues 32–421 (KNVGQYILNR…VQSITPFNLN (390 aa)) are mitochondrial matrix. Residue 228-235 (GEPGNGKS) coordinates ATP.

It belongs to the AAA ATPase family. BCS1 subfamily.

The protein localises to the mitochondrion inner membrane. It catalyses the reaction ATP + H2O = ADP + phosphate + H(+). Chaperone necessary for the assembly of mitochondrial respiratory chain complex III. The sequence is that of Probable mitochondrial chaperone BCS1-A (bcs1la) from Dictyostelium discoideum (Social amoeba).